We begin with the raw amino-acid sequence, 361 residues long: DNA replication and repair protein RecF (361 aa).

30–37 (GPNGSGKT) serves as a coordination point for ATP.

The protein belongs to the RecF family.

The protein localises to the cytoplasm. Its function is as follows. The RecF protein is involved in DNA metabolism; it is required for DNA replication and normal SOS inducibility. RecF binds preferentially to single-stranded, linear DNA. It also seems to bind ATP. The polypeptide is DNA replication and repair protein RecF (Erwinia tasmaniensis (strain DSM 17950 / CFBP 7177 / CIP 109463 / NCPPB 4357 / Et1/99)).